A 771-amino-acid polypeptide reads, in one-letter code: Ribonucleoside-diphosphate reductase large subunit (771 aa).

The ATP-cone domain occupies 1–92; the sequence is MFVIKRNGYK…VSNLHKETKK (92 aa). Residues 5 to 6, 11 to 17, Thr-53, Asp-57, and Lys-88 each bind ATP; these read KR and ENVMFDK. Positions 202 and 217 each coordinate GDP. Residues 226-228, Lys-243, and Arg-256 each bind dTTP; that span reads DSI. Residue Asn-427 participates in GDP binding. The active-site Proton acceptor is the Asn-427. Residue Cys-429 is the Cysteine radical intermediate of the active site. GDP-binding positions include Glu-431 and 603 to 606; that span reads TAST. Catalysis depends on Glu-431, which acts as the Proton acceptor.

Belongs to the ribonucleoside diphosphate reductase large chain family. In terms of assembly, interacts with RNR2/OPG047 subunit. The cofactor is Mg(2+).

It carries out the reaction a 2'-deoxyribonucleoside 5'-diphosphate + [thioredoxin]-disulfide + H2O = a ribonucleoside 5'-diphosphate + [thioredoxin]-dithiol. Functionally, ribonucleoside-diphosphate reductase holoenzyme provides the precursors necessary for viral DNA synthesis. Allows virus growth in non-dividing cells. Catalyzes the biosynthesis of deoxyribonucleotides from the corresponding ribonucleotides. The polypeptide is Ribonucleoside-diphosphate reductase large subunit (OPG080) (Homo sapiens (Human)).